The chain runs to 744 residues: Polyribonucleotide nucleotidyltransferase (744 aa).

Mg(2+) contacts are provided by aspartate 487 and aspartate 493. Residues 554 to 613 (PSTTTLKVDKDKIRDIIGPGGKVIKEICETSGAKIDISDDGTVSIYASDKDKLKVALDKV) form the KH domain. The S1 motif domain maps to 623-691 (GEVFNGTVMK…NKGKAKLTIK (69 aa)). A disordered region spans residues 691–744 (KNAEKDKSSANPKPKNSPKEHQEPEKRDNGKKRAWNEDNNAETTEVVTERKYFS). The segment covering 707-718 (SPKEHQEPEKRD) has biased composition (basic and acidic residues). Polar residues predominate over residues 727–736 (EDNNAETTEV).

This sequence belongs to the polyribonucleotide nucleotidyltransferase family. Mg(2+) serves as cofactor.

It is found in the cytoplasm. It catalyses the reaction RNA(n+1) + phosphate = RNA(n) + a ribonucleoside 5'-diphosphate. In terms of biological role, involved in mRNA degradation. Catalyzes the phosphorolysis of single-stranded polyribonucleotides processively in the 3'- to 5'-direction. This chain is Polyribonucleotide nucleotidyltransferase, found in Rickettsia bellii (strain OSU 85-389).